The primary structure comprises 228 residues: 2-C-methyl-D-erythritol 4-phosphate cytidylyltransferase (228 aa).

It belongs to the IspD/TarI cytidylyltransferase family. IspD subfamily.

It catalyses the reaction 2-C-methyl-D-erythritol 4-phosphate + CTP + H(+) = 4-CDP-2-C-methyl-D-erythritol + diphosphate. It functions in the pathway isoprenoid biosynthesis; isopentenyl diphosphate biosynthesis via DXP pathway; isopentenyl diphosphate from 1-deoxy-D-xylulose 5-phosphate: step 2/6. Functionally, catalyzes the formation of 4-diphosphocytidyl-2-C-methyl-D-erythritol from CTP and 2-C-methyl-D-erythritol 4-phosphate (MEP). The chain is 2-C-methyl-D-erythritol 4-phosphate cytidylyltransferase from Nostoc sp. (strain PCC 7120 / SAG 25.82 / UTEX 2576).